The following is a 231-amino-acid chain: Transcriptional regulator NRG1 (231 aa).

Ser-163 bears the Phosphoserine mark. 2 consecutive C2H2-type zinc fingers follow at residues 174 to 196 and 202 to 226; these read YICK…NRIH and HCCP…YRTH.

The protein resides in the nucleus. Its function is as follows. Transcriptional repressor involved in regulation of glucose repression. Binds to UAS-1 in the STA1 promoter. The sequence is that of Transcriptional regulator NRG1 (NRG1) from Saccharomyces cerevisiae (strain ATCC 204508 / S288c) (Baker's yeast).